The following is a 346-amino-acid chain: [LysW]-lysine/[LysW]-ornithine hydrolase (346 aa).

His-67 lines the Zn(2+) pocket. Asp-69 is a catalytic residue. A Zn(2+)-binding site is contributed by Asp-91. Catalysis depends on Glu-121, which acts as the Proton acceptor. 3 residues coordinate Zn(2+): Glu-122, Glu-145, and His-316.

Belongs to the peptidase M20A family. LysK subfamily. The cofactor is Zn(2+). Requires Co(2+) as cofactor.

It is found in the cytoplasm. The enzyme catalyses [amino-group carrier protein]-C-terminal-gamma-(L-lysyl)-L-glutamate + H2O = [amino-group carrier protein]-C-terminal-L-glutamate + L-lysine. It carries out the reaction [amino-group carrier protein]-C-terminal-gamma-(L-ornithyl)-L-glutamate + H2O = [amino-group carrier protein]-C-terminal-L-glutamate + L-ornithine. It participates in amino-acid biosynthesis; L-lysine biosynthesis via AAA pathway; L-lysine from L-alpha-aminoadipate (Thermus route): step 5/5. Its pathway is amino-acid biosynthesis; L-arginine biosynthesis. Catalyzes the release of L-lysine from [LysW]-gamma-L-lysine and the release of L-ornithine from [LysW]-L-ornithine. The sequence is that of [LysW]-lysine/[LysW]-ornithine hydrolase from Sulfurisphaera tokodaii (strain DSM 16993 / JCM 10545 / NBRC 100140 / 7) (Sulfolobus tokodaii).